Here is a 198-residue protein sequence, read N- to C-terminus: Recombination protein RecR (198 aa).

The segment at 57–72 (CSSCGHITDKDPCYIC) adopts a C4-type zinc-finger fold. Positions 80 to 175 (SIICVVQDPK…KITRIAHGLP (96 aa)) constitute a Toprim domain.

Belongs to the RecR family.

Its function is as follows. May play a role in DNA repair. It seems to be involved in an RecBC-independent recombinational process of DNA repair. It may act with RecF and RecO. The polypeptide is Recombination protein RecR (Anoxybacillus flavithermus (strain DSM 21510 / WK1)).